Consider the following 105-residue polypeptide: Circadian clock oscillator protein KaiB (105 aa).

This sequence belongs to the KaiB family. May undergo a major conformational rearrangment; in the free state forms homooligomers. When bound to KaiC switches to a monomeric thioredoxin-fold (KaiB(fs)). The active oscillator complex is probably KaiC(6):KaiB(6).

Component of the KaiBC clock protein complex, which constitutes the main circadian regulator in cyanobacteria; it may modify the ATPase activity of KaiC. Functionally, may be a metamorphic protein which reversibly switches between an inactive tetrameric fold and a rare, thioredoxin-like monomeric fold (KaiB(fs)). KaiB(fs) binds phospho-KaiC, and perhaps clock output effectors. This Prochlorococcus marinus (strain MIT 9312) protein is Circadian clock oscillator protein KaiB.